We begin with the raw amino-acid sequence, 440 residues long: MKAAVDLKPTLTIIKTEKVDLELFPSPDMECADVPLLTPSSKEMMSQALKATFSGFTKEQQRLGIPKDPRQWTETHVRDWVMWAVNEFSLKGVDFQKFCMSGAALCALGKECFLELAPDFVGDILWEHLEILQKEDVKPYQVNGANPTYPESCYTSDYFISYGIEHAQCVPPSEFSEPSFITESYQTLHPISSEELLSLKYENDYPSVILQDPLQTDTLQTDYFAIKQEVLTPDNMCLGRASRGKLGGQDSFESVESYDSCDRLTQSWSSQSSFNSLQRVPSYDSFDYEDYPAALPNHKPKGTFKDYVRDRADLNKDKPVIPAAALAGYTGSGPIQLWQFLLELLTDKSCQSFISWTGDGWEFKLSDPDEVARRWGKRKNKPKMNYEKLSRGLRYYYDKNIIHKTAGKRYVYRFVCDLQSLLGYTPEELHAMLDVKPDAD.

2 positions are modified to N6-acetyllysine; alternate: Lys-8 and Lys-15. Glycyl lysine isopeptide (Lys-Gly) (interchain with G-Cter in SUMO2); alternate cross-links involve residues Lys-8 and Lys-15. A Glycyl lysine isopeptide (Lys-Gly) (interchain with G-Cter in SUMO); alternate cross-link involves residue Lys-15. Position 38 is a phosphothreonine; by MAPK (Thr-38). Residues 51 to 136 (ATFSGFTKEQ…EHLEILQKED (86 aa)) form the PNT domain. The segment at 130–243 (EILQKEDVKP…DNMCLGRASR (114 aa)) is activation domain; required for transcription activation. Lys-138 is covalently cross-linked (Glycyl lysine isopeptide (Lys-Gly) (interchain with G-Cter in SUMO2)). Tyr-223 is modified (phosphotyrosine). Lys-227 is covalently cross-linked (Glycyl lysine isopeptide (Lys-Gly) (interchain with G-Cter in SUMO)). Position 251 is a phosphoserine; by CaMK2 (Ser-251). Ser-254 is modified (phosphoserine). Thr-265 carries the post-translational modification Phosphothreonine. Ser-267 and Ser-270 each carry phosphoserine. A phosphoserine; by CaMK2 mark is found at Ser-282 and Ser-285. Residues 304 to 312 (FKDYVRDRA) form a helix HI-1 region. An N6-acetyllysine modification is found at Lys-305. The segment at 323 to 330 (AAALAGYT) is helix HI-2. The ETS DNA-binding region spans 335 to 415 (IQLWQFLLEL…AGKRYVYRFV (81 aa)). The tract at residues 418 to 422 (LQSLL) is helix H4. Residues 426-432 (PEELHAM) form a helix H5 region.

Belongs to the ETS family. In terms of assembly, binds DNA as a homodimer; homodimerization is required for transcription activation. Interacts with MAF and MAFB. Interacts with PAX5; the interaction alters DNA-binding properties. Interacts with DAXX. Interacts with UBE2I. Interacts with SP100; the interaction is direct and modulates ETS1 transcriptional activity. Post-translationally, phosphorylation at Ser-251, Ser-282 and Ser-285 by CaMK2/CaMKII in response to calcium signaling decreases affinity for DNA: an increasing number of phosphoserines causes DNA-binding to become progressively weaker. In terms of processing, sumoylated on Lys-15 and Lys-227, preferentially with SUMO2; which inhibits transcriptional activity. Ubiquitinated; which induces proteasomal degradation.

The protein localises to the nucleus. Its subcellular location is the cytoplasm. With respect to regulation, autoinhibited by a module composed of four alpha helices (HI-1, HI-2, H4, and H5) that flank the DNA-binding ETS domain, reducing the affinity for DNA. Phosphorylation by CaMK2/CaMKII in response to calcium signaling decreases affinity for DNA. Functionally, transcription factor. Directly controls the expression of cytokine and chemokine genes in a wide variety of different cellular contexts. May control the differentiation, survival and proliferation of lymphoid cells. May also regulate angiogenesis through regulation of expression of genes controlling endothelial cell migration and invasion. The sequence is that of Protein C-ets-1 (Ets1) from Mus musculus (Mouse).